We begin with the raw amino-acid sequence, 623 residues long: NAD-dependent malic enzyme 1, mitochondrial (623 aa).

The N-terminal 38 residues, 1 to 38, are a transit peptide targeting the mitochondrion; it reads MGIANKLRLSSSSLSRILHRRILYSSAVRSFTTSEGHR. The active-site Proton donor is Tyr-143. Position 196 (Arg-196) interacts with NAD(+). The active-site Proton acceptor is Lys-214. Residues Glu-285, Asp-286, and Asp-309 each coordinate a divalent metal cation. NAD(+) contacts are provided by Asp-309 and Asn-464.

The protein belongs to the malic enzymes family. In terms of assembly, homodimer. Heterodimer of two related subunits in NAD-MEH complex. Interacts with NAD-ME2. Mg(2+) serves as cofactor. The cofactor is Mn(2+). As to expression, expressed in leaves, stems, flowers, and roots (at protein level).

The protein localises to the mitochondrion. It catalyses the reaction (S)-malate + NAD(+) = pyruvate + CO2 + NADH. With respect to regulation, activated by oxaloacetate (OAA), 2-ketoglutarate, succinate and fumarate as homodimer and by OAA, 2-ketoglutarate, succinate, fumarate and coenzyme A (acetyl-CoA and CoA) as heterodimer NAD-MEH. Involved in the regulation of sugars and amino acids metabolisms during the night period. In Arabidopsis thaliana (Mouse-ear cress), this protein is NAD-dependent malic enzyme 1, mitochondrial (NAD-ME1).